The primary structure comprises 213 residues: Ephrin-A2 (213 aa).

The signal sequence occupies residues 1–24 (MAPAQRPLLPLLLLLLPLPPPPFA). The Ephrin RBD domain maps to 34 to 174 (SDRYAVYWNR…RLKVYVRPTN (141 aa)). An N-linked (GlcNAc...) asparagine glycan is attached at N42. 2 disulfides stabilise this stretch: C73–C114 and C102–C163. 2 N-linked (GlcNAc...) asparagine glycosylation sites follow: N174 and N188. N188 carries GPI-anchor amidated asparagine lipidation. Positions 189–213 (NSCSSPGGCRLFLSTIPVLWTLLGS) are cleaved as a propeptide — removed in mature form.

The protein belongs to the ephrin family. As to quaternary structure, binds to the receptor tyrosine kinases EPHA3, EPHA4 and EPHA5. Interacts with EPHA8; activates EPHA8.

It localises to the cell membrane. Cell surface GPI-bound ligand for Eph receptors, a family of receptor tyrosine kinases which are crucial for migration, repulsion and adhesion during neuronal, vascular and epithelial development. Binds promiscuously Eph receptors residing on adjacent cells, leading to contact-dependent bidirectional signaling into neighboring cells. The signaling pathway downstream of the receptor is referred to as forward signaling while the signaling pathway downstream of the ephrin ligand is referred to as reverse signaling. With the EPHA2 receptor may play a role in bone remodeling through regulation of osteoclastogenesis and osteoblastogenesis. The polypeptide is Ephrin-A2 (EFNA2) (Homo sapiens (Human)).